Here is a 2329-residue protein sequence, read N- to C-terminus: Pre-mRNA-splicing factor 8 homolog (2329 aa).

The segment at 1–53 (MANYGGHPQTEPHAIPDSILEEKSRKWKQLQGKRYSEKKKFGMSDTQKEEMPP) is disordered. Basic and acidic residues predominate over residues 34–53 (RYSEKKKFGMSDTQKEEMPP). The reverse transcriptase homology domain stretch occupies residues 804–1295 (TTVHWLESRR…KIQTRIKIGL (492 aa)). A linker region spans residues 1296 to 1570 (NSKMPSRFPP…TLKISLIQIF (275 aa)). The tract at residues 1506-1519 (MKFKKLTNAQRSGL) is important for branch point selection. The restriction endonuclease homology domain stretch occupies residues 1574–1745 (LWQKIHESVV…LRERIRKGLQ (172 aa)). An RNase H homology domain region spans residues 1760-2013 (NYGELFSNQI…ILGMEISAPS (254 aa)). Residues 2096–2227 (TYILPKNILK…LTAYKLTPSG (132 aa)) form the MPN domain.

In terms of assembly, part of the U5 snRNP complex and of the U4/U6-U5 tri-snRNP complex.

The protein localises to the nucleus. Its function is as follows. Functions as a scaffold that mediates the ordered assembly of spliceosomal proteins and snRNAs. Required for the assembly of the U4/U6-U5 tri-snRNP complex. Functions as a scaffold that positions spliceosomal U2, U5 and U6 snRNAs at splice sites on pre-mRNA substrates, so that splicing can occur. Interacts with both the 5' and the 3' splice site. The protein is Pre-mRNA-splicing factor 8 homolog (prp-8) of Caenorhabditis elegans.